A 274-amino-acid chain; its full sequence is NADPH-dependent 7-cyano-7-deazaguanine reductase (274 aa).

80–82 (VES) lines the substrate pocket. Position 82–83 (82–83 (SK)) interacts with NADPH. Cysteine 181 functions as the Thioimide intermediate in the catalytic mechanism. The active-site Proton donor is aspartate 188. A substrate-binding site is contributed by 220 to 221 (HE). Residue 249 to 250 (RG) coordinates NADPH.

This sequence belongs to the GTP cyclohydrolase I family. QueF type 2 subfamily. As to quaternary structure, homodimer.

Its subcellular location is the cytoplasm. The enzyme catalyses 7-aminomethyl-7-carbaguanine + 2 NADP(+) = 7-cyano-7-deazaguanine + 2 NADPH + 3 H(+). Its pathway is tRNA modification; tRNA-queuosine biosynthesis. In terms of biological role, catalyzes the NADPH-dependent reduction of 7-cyano-7-deazaguanine (preQ0) to 7-aminomethyl-7-deazaguanine (preQ1). This chain is NADPH-dependent 7-cyano-7-deazaguanine reductase, found in Paraburkholderia phytofirmans (strain DSM 17436 / LMG 22146 / PsJN) (Burkholderia phytofirmans).